A 375-amino-acid chain; its full sequence is Tyrosine--tRNA ligase (375 aa).

L-tyrosine is bound by residues Tyr-37, Tyr-168, Gln-172, Asp-175, and Gln-190. Residues 251–255 (KMSKS) carry the 'KMSKS' region motif. Lys-254 contacts ATP.

The protein belongs to the class-I aminoacyl-tRNA synthetase family. TyrS type 4 subfamily. Homodimer.

The protein localises to the cytoplasm. The catalysed reaction is tRNA(Tyr) + L-tyrosine + ATP = L-tyrosyl-tRNA(Tyr) + AMP + diphosphate + H(+). In terms of biological role, catalyzes the attachment of tyrosine to tRNA(Tyr) in a two-step reaction: tyrosine is first activated by ATP to form Tyr-AMP and then transferred to the acceptor end of tRNA(Tyr). The sequence is that of Tyrosine--tRNA ligase from Pyrococcus furiosus (strain ATCC 43587 / DSM 3638 / JCM 8422 / Vc1).